We begin with the raw amino-acid sequence, 79 residues long: Small ribosomal subunit protein uS17 (79 aa).

Belongs to the universal ribosomal protein uS17 family. Part of the 30S ribosomal subunit.

Its function is as follows. One of the primary rRNA binding proteins, it binds specifically to the 5'-end of 16S ribosomal RNA. In Rhizobium etli (strain ATCC 51251 / DSM 11541 / JCM 21823 / NBRC 15573 / CFN 42), this protein is Small ribosomal subunit protein uS17.